A 169-amino-acid chain; its full sequence is Small ribosomal subunit protein bS16 (169 aa).

The tract at residues 114–169 is disordered; sequence AEGPTAEAITEKRRKAKEEAEAKAAAEAEAAEKAEAEAAEKAAAEAAEESEEASAE. A compositionally biased stretch (basic and acidic residues) spans 129-156; it reads AKEEAEAKAAAEAEAAEKAEAEAAEKAA. Residues 159–169 show a composition bias toward acidic residues; sequence AAEESEEASAE.

This sequence belongs to the bacterial ribosomal protein bS16 family.

The polypeptide is Small ribosomal subunit protein bS16 (Corynebacterium urealyticum (strain ATCC 43042 / DSM 7109)).